The following is a 508-amino-acid chain: Pentatricopeptide repeat-containing protein At5g48730, chloroplastic (508 aa).

Residues 1–10 (MVSLSTSTSH) are compositionally biased toward polar residues. Residues 1–22 (MVSLSTSTSHAPPLPTNRRTAE) form a disordered region. Residues 1-28 (MVSLSTSTSHAPPLPTNRRTAERTFTVR) constitute a chloroplast transit peptide. PPR repeat units follow at residues 149–183 (NVGI…GCVV), 184–214 (NHEV…MKSS), 220–254 (DVHT…GIRP), 255–290 (NTIT…DCKP), 291–325 (DSWT…GIEP), 326–360 (NIRT…HYSW), 361–395 (TIVT…RIFP), 396–430 (SCVT…DIRL), 431–465 (DLVF…GFKP), and 466–500 (DKIT…GEAQ).

The protein belongs to the PPR family. P subfamily.

The protein localises to the plastid. Its subcellular location is the chloroplast. In Arabidopsis thaliana (Mouse-ear cress), this protein is Pentatricopeptide repeat-containing protein At5g48730, chloroplastic.